Here is a 279-residue protein sequence, read N- to C-terminus: Fructose-1,6-bisphosphatase class 1 (279 aa).

Mg(2+) is bound by residues glutamate 65, aspartate 85, leucine 87, and aspartate 88. Substrate-binding positions include 88–91 (DGSS), tyrosine 190, and lysine 221. Position 227 (glutamate 227) interacts with Mg(2+).

It belongs to the FBPase class 1 family. Homotetramer. Mg(2+) is required as a cofactor.

The protein localises to the cytoplasm. The enzyme catalyses beta-D-fructose 1,6-bisphosphate + H2O = beta-D-fructose 6-phosphate + phosphate. It participates in carbohydrate biosynthesis; gluconeogenesis. This chain is Fructose-1,6-bisphosphatase class 1, found in Helicobacter hepaticus (strain ATCC 51449 / 3B1).